The sequence spans 169 residues: S-ribosylhomocysteine lyase (169 aa).

Residues His-54, His-58, and Cys-128 each coordinate Fe cation.

Belongs to the LuxS family. As to quaternary structure, homodimer. It depends on Fe cation as a cofactor.

It catalyses the reaction S-(5-deoxy-D-ribos-5-yl)-L-homocysteine = (S)-4,5-dihydroxypentane-2,3-dione + L-homocysteine. Involved in the synthesis of autoinducer 2 (AI-2) which is secreted by bacteria and is used to communicate both the cell density and the metabolic potential of the environment. The regulation of gene expression in response to changes in cell density is called quorum sensing. Catalyzes the transformation of S-ribosylhomocysteine (RHC) to homocysteine (HC) and 4,5-dihydroxy-2,3-pentadione (DPD). This Shewanella halifaxensis (strain HAW-EB4) protein is S-ribosylhomocysteine lyase.